The chain runs to 288 residues: ATP synthase gamma chain (288 aa).

It belongs to the ATPase gamma chain family. In terms of assembly, F-type ATPases have 2 components, CF(1) - the catalytic core - and CF(0) - the membrane proton channel. CF(1) has five subunits: alpha(3), beta(3), gamma(1), delta(1), epsilon(1). CF(0) has three main subunits: a, b and c.

It is found in the cell membrane. In terms of biological role, produces ATP from ADP in the presence of a proton gradient across the membrane. The gamma chain is believed to be important in regulating ATPase activity and the flow of protons through the CF(0) complex. This chain is ATP synthase gamma chain, found in Shouchella clausii (strain KSM-K16) (Alkalihalobacillus clausii).